The following is an 879-amino-acid chain: Leucine--tRNA ligase (879 aa).

The 'HIGH' region signature appears at 45–55; the sequence is PYPSGALHMGH. The 'KMSKS' region motif lies at 637 to 641; sequence KMSKS. K640 provides a ligand contact to ATP.

The protein belongs to the class-I aminoacyl-tRNA synthetase family.

Its subcellular location is the cytoplasm. The catalysed reaction is tRNA(Leu) + L-leucine + ATP = L-leucyl-tRNA(Leu) + AMP + diphosphate. This Xylella fastidiosa (strain 9a5c) protein is Leucine--tRNA ligase.